The following is a 300-amino-acid chain: Tyrosine recombinase XerC (300 aa).

The region spanning 2 to 88 (TQEGQLEKRF…SLRSFYTFLL (87 aa)) is the Core-binding (CB) domain. Residues 109 to 294 (RLPKFFYSEE…TKEHLKSTYM (186 aa)) enclose the Tyr recombinase domain. Active-site residues include arginine 150, lysine 174, histidine 246, arginine 249, and histidine 272. The O-(3'-phospho-DNA)-tyrosine intermediate role is filled by tyrosine 281.

It belongs to the 'phage' integrase family. XerC subfamily. As to quaternary structure, forms a cyclic heterotetrameric complex composed of two molecules of XerC and two molecules of XerD.

The protein resides in the cytoplasm. In terms of biological role, site-specific tyrosine recombinase, which acts by catalyzing the cutting and rejoining of the recombining DNA molecules. The XerC-XerD complex is essential to convert dimers of the bacterial chromosome into monomers to permit their segregation at cell division. It also contributes to the segregational stability of plasmids. The chain is Tyrosine recombinase XerC from Listeria innocua serovar 6a (strain ATCC BAA-680 / CLIP 11262).